The sequence spans 462 residues: Cysteine--tRNA ligase (462 aa).

Cys-30 contacts Zn(2+). The short motif at 32 to 42 (MTVYDYCHVGH) is the 'HIGH' region element. 3 residues coordinate Zn(2+): Cys-214, His-239, and Glu-243. Residues 271–275 (KMSKS) carry the 'KMSKS' region motif. Residue Lys-274 participates in ATP binding.

The protein belongs to the class-I aminoacyl-tRNA synthetase family. As to quaternary structure, monomer. Zn(2+) is required as a cofactor.

The protein resides in the cytoplasm. It catalyses the reaction tRNA(Cys) + L-cysteine + ATP = L-cysteinyl-tRNA(Cys) + AMP + diphosphate. The sequence is that of Cysteine--tRNA ligase from Cupriavidus taiwanensis (strain DSM 17343 / BCRC 17206 / CCUG 44338 / CIP 107171 / LMG 19424 / R1) (Ralstonia taiwanensis (strain LMG 19424)).